The following is a 352-amino-acid chain: UDP-N-acetylglucosamine--N-acetylmuramyl-(pentapeptide) pyrophosphoryl-undecaprenol N-acetylglucosamine transferase (352 aa).

UDP-N-acetyl-alpha-D-glucosamine is bound by residues Thr-11–Gly-13, Asn-120, Arg-161, Ser-188, and Gln-286.

It belongs to the glycosyltransferase 28 family. MurG subfamily.

It is found in the cell inner membrane. The enzyme catalyses di-trans,octa-cis-undecaprenyl diphospho-N-acetyl-alpha-D-muramoyl-L-alanyl-D-glutamyl-meso-2,6-diaminopimeloyl-D-alanyl-D-alanine + UDP-N-acetyl-alpha-D-glucosamine = di-trans,octa-cis-undecaprenyl diphospho-[N-acetyl-alpha-D-glucosaminyl-(1-&gt;4)]-N-acetyl-alpha-D-muramoyl-L-alanyl-D-glutamyl-meso-2,6-diaminopimeloyl-D-alanyl-D-alanine + UDP + H(+). It participates in cell wall biogenesis; peptidoglycan biosynthesis. Cell wall formation. Catalyzes the transfer of a GlcNAc subunit on undecaprenyl-pyrophosphoryl-MurNAc-pentapeptide (lipid intermediate I) to form undecaprenyl-pyrophosphoryl-MurNAc-(pentapeptide)GlcNAc (lipid intermediate II). This chain is UDP-N-acetylglucosamine--N-acetylmuramyl-(pentapeptide) pyrophosphoryl-undecaprenol N-acetylglucosamine transferase, found in Prochlorococcus marinus (strain NATL2A).